We begin with the raw amino-acid sequence, 570 residues long: Sulfite reductase [NADPH] hemoprotein beta-component (570 aa).

Residues C434, C440, C479, and C483 each contribute to the [4Fe-4S] cluster site. C483 is a siroheme binding site.

The protein belongs to the nitrite and sulfite reductase 4Fe-4S domain family. As to quaternary structure, alpha(8)-beta(8). The alpha component is a flavoprotein, the beta component is a hemoprotein. The cofactor is siroheme. [4Fe-4S] cluster serves as cofactor.

It catalyses the reaction hydrogen sulfide + 3 NADP(+) + 3 H2O = sulfite + 3 NADPH + 4 H(+). It participates in sulfur metabolism; hydrogen sulfide biosynthesis; hydrogen sulfide from sulfite (NADPH route): step 1/1. Its function is as follows. Component of the sulfite reductase complex that catalyzes the 6-electron reduction of sulfite to sulfide. This is one of several activities required for the biosynthesis of L-cysteine from sulfate. This chain is Sulfite reductase [NADPH] hemoprotein beta-component, found in Salmonella agona (strain SL483).